A 710-amino-acid chain; its full sequence is Serine/threonine-protein phosphatase PP-Z2 (710 aa).

The tract at residues 1 to 382 is disordered; sequence MGNSGSKQHT…ADGDNGSRTN (382 aa). Gly2 is lipidated: N-myristoyl glycine. A compositionally biased stretch (basic and acidic residues) spans 15-27; it reads KKDDHDGDRKKTL. The span at 40–49 shows a compositional bias: low complexity; the sequence is SLKSSRSLRS. 2 positions are modified to phosphoserine: Ser55 and Ser71. Polar residues-rich tracts occupy residues 62–77 and 95–104; these read NVQA…SSTL and PNNHYLTSHP. Composition is skewed to low complexity over residues 105-125 and 143-155; these read SSSR…NNNS and NSTS…SFNS. The span at 160 to 172 shows a compositional bias: acidic residues; the sequence is LTDDDDDRGDDGG. A Phosphothreonine modification is found at Thr161. Phosphoserine is present on residues Ser203 and Ser224. Residues 247–260 show a composition bias toward low complexity; that stretch reads SNRSNSHASSRKSS. Polar residues predominate over residues 261–273; it reads FGSTGNTAYSTPL. At Thr271 the chain carries Phosphothreonine. The residue at position 275 (Ser275) is a Phosphoserine. Over residues 291–302 the composition is skewed to polar residues; the sequence is DNVNGRGTSPIP. A Phosphoserine modification is found at Ser310. The Mn(2+) site is built by Asp454, His456, Asp482, and Asn514. The active-site Proton donor is His515. Residues His563 and His638 each contribute to the Mn(2+) site.

It belongs to the PPP phosphatase family. PP-Z subfamily. Mn(2+) serves as cofactor.

It catalyses the reaction O-phospho-L-seryl-[protein] + H2O = L-seryl-[protein] + phosphate. The catalysed reaction is O-phospho-L-threonyl-[protein] + H2O = L-threonyl-[protein] + phosphate. Essential for the maintenance of cell size and integrity in response to osmotic stress. The polypeptide is Serine/threonine-protein phosphatase PP-Z2 (PPZ2) (Saccharomyces cerevisiae (strain ATCC 204508 / S288c) (Baker's yeast)).